The chain runs to 88 residues: DNA-directed RNA polymerase subunit omega (88 aa).

Belongs to the RNA polymerase subunit omega family. In terms of assembly, the RNAP catalytic core consists of 2 alpha, 1 beta, 1 beta' and 1 omega subunit. When a sigma factor is associated with the core the holoenzyme is formed, which can initiate transcription.

It carries out the reaction RNA(n) + a ribonucleoside 5'-triphosphate = RNA(n+1) + diphosphate. Promotes RNA polymerase assembly. Latches the N- and C-terminal regions of the beta' subunit thereby facilitating its interaction with the beta and alpha subunits. In Pseudomonas aeruginosa (strain LESB58), this protein is DNA-directed RNA polymerase subunit omega.